A 281-amino-acid chain; its full sequence is UPF0046 protein C25E10.12 (281 aa).

It belongs to the UPF0046 family.

The chain is UPF0046 protein C25E10.12 from Caenorhabditis elegans.